Here is a 446-residue protein sequence, read N- to C-terminus: UDP-N-acetylmuramoylalanine--D-glutamate ligase (446 aa).

Position 112-118 (112-118 (GTNGKST)) interacts with ATP.

It belongs to the MurCDEF family.

The protein resides in the cytoplasm. The enzyme catalyses UDP-N-acetyl-alpha-D-muramoyl-L-alanine + D-glutamate + ATP = UDP-N-acetyl-alpha-D-muramoyl-L-alanyl-D-glutamate + ADP + phosphate + H(+). Its pathway is cell wall biogenesis; peptidoglycan biosynthesis. Cell wall formation. Catalyzes the addition of glutamate to the nucleotide precursor UDP-N-acetylmuramoyl-L-alanine (UMA). The polypeptide is UDP-N-acetylmuramoylalanine--D-glutamate ligase (Baumannia cicadellinicola subsp. Homalodisca coagulata).